The sequence spans 297 residues: Methionyl-tRNA formyltransferase (297 aa).

The tract at residues Gln31–Glu52 is disordered. Ser108 to Pro111 contacts (6S)-5,6,7,8-tetrahydrofolate.

This sequence belongs to the Fmt family.

The enzyme catalyses L-methionyl-tRNA(fMet) + (6R)-10-formyltetrahydrofolate = N-formyl-L-methionyl-tRNA(fMet) + (6S)-5,6,7,8-tetrahydrofolate + H(+). Its function is as follows. Attaches a formyl group to the free amino group of methionyl-tRNA(fMet). The formyl group appears to play a dual role in the initiator identity of N-formylmethionyl-tRNA by promoting its recognition by IF2 and preventing the misappropriation of this tRNA by the elongation apparatus. The polypeptide is Methionyl-tRNA formyltransferase (Paracoccus denitrificans (strain Pd 1222)).